A 236-amino-acid polypeptide reads, in one-letter code: Small ribosomal subunit protein uS2c (236 aa).

Belongs to the universal ribosomal protein uS2 family.

It localises to the plastid. Its subcellular location is the chloroplast. The protein is Small ribosomal subunit protein uS2c (rps2) of Ceratophyllum demersum (Rigid hornwort).